The following is a 184-amino-acid chain: MKNITDSFVSLGHWPSAGSFGFNTDILATNLINLSVVLGVLIFFGKGVLSDLLDNRKQRILDTIRNSEKLREGAIEQLEKARARLRKVEIEADQFRTNGYSEIEREKLNLINSTYKTLEQLENYKNETIHFEQQRTINQVRQRVFQQALQGALGTLNSCLTNELHLRTINANLGMFGAIKEITD.

A helical transmembrane segment spans residues 27–49 (LATNLINLSVVLGVLIFFGKGVL).

It belongs to the ATPase B chain family. As to quaternary structure, F-type ATPases have 2 components, F(1) - the catalytic core - and F(0) - the membrane proton channel. F(1) has five subunits: alpha(3), beta(3), gamma(1), delta(1), epsilon(1). F(0) has four main subunits: a(1), b(1), b'(1) and c(10-14). The alpha and beta chains form an alternating ring which encloses part of the gamma chain. F(1) is attached to F(0) by a central stalk formed by the gamma and epsilon chains, while a peripheral stalk is formed by the delta, b and b' chains.

The protein localises to the plastid. It is found in the chloroplast thylakoid membrane. In terms of biological role, f(1)F(0) ATP synthase produces ATP from ADP in the presence of a proton or sodium gradient. F-type ATPases consist of two structural domains, F(1) containing the extramembraneous catalytic core and F(0) containing the membrane proton channel, linked together by a central stalk and a peripheral stalk. During catalysis, ATP synthesis in the catalytic domain of F(1) is coupled via a rotary mechanism of the central stalk subunits to proton translocation. Functionally, component of the F(0) channel, it forms part of the peripheral stalk, linking F(1) to F(0). The chain is ATP synthase subunit b, chloroplastic from Manihot esculenta (Cassava).